Reading from the N-terminus, the 150-residue chain is Large ribosomal subunit protein bL9 (150 aa).

This sequence belongs to the bacterial ribosomal protein bL9 family.

In terms of biological role, binds to the 23S rRNA. The protein is Large ribosomal subunit protein bL9 of Buchnera aphidicola subsp. Schizaphis graminum (strain Sg).